The sequence spans 215 residues: Uridine kinase (215 aa).

16 to 23 contributes to the ATP binding site; it reads GASASGKS.

It belongs to the uridine kinase family.

It is found in the cytoplasm. It catalyses the reaction uridine + ATP = UMP + ADP + H(+). The enzyme catalyses cytidine + ATP = CMP + ADP + H(+). Its pathway is pyrimidine metabolism; CTP biosynthesis via salvage pathway; CTP from cytidine: step 1/3. It participates in pyrimidine metabolism; UMP biosynthesis via salvage pathway; UMP from uridine: step 1/1. The protein is Uridine kinase of Aliivibrio fischeri (strain ATCC 700601 / ES114) (Vibrio fischeri).